Here is a 362-residue protein sequence, read N- to C-terminus: Methylthioribose-1-phosphate isomerase (362 aa).

Asp252 (proton donor) is an active-site residue.

The protein belongs to the eIF-2B alpha/beta/delta subunits family. MtnA subfamily.

Its subcellular location is the cytoplasm. It localises to the nucleus. The catalysed reaction is 5-(methylsulfanyl)-alpha-D-ribose 1-phosphate = 5-(methylsulfanyl)-D-ribulose 1-phosphate. Its pathway is amino-acid biosynthesis; L-methionine biosynthesis via salvage pathway; L-methionine from S-methyl-5-thio-alpha-D-ribose 1-phosphate: step 1/6. Catalyzes the interconversion of methylthioribose-1-phosphate (MTR-1-P) into methylthioribulose-1-phosphate (MTRu-1-P). The polypeptide is Methylthioribose-1-phosphate isomerase (Drosophila pseudoobscura pseudoobscura (Fruit fly)).